Reading from the N-terminus, the 236-residue chain is Zinc finger AN1 domain-containing stress-associated protein 13 (236 aa).

2 disordered regions span residues 48 to 81 and 150 to 173; these read KEGR…PGKR and TVPE…AKTK. Positions 66 to 75 are enriched in polar residues; that stretch reads RLQLPTTSIV. An AN1-type; degenerate zinc finger spans residues 170–216; it reads AKTKSRCAACGRRVGLMGFECRCGAVFCGAHPLLGQARLWLRLQGRA. Positions 176, 179, 197, and 200 each coordinate Zn(2+).

May be involved in environmental stress response. This chain is Zinc finger AN1 domain-containing stress-associated protein 13 (SAP13), found in Oryza sativa subsp. japonica (Rice).